Reading from the N-terminus, the 257-residue chain is 5'-nucleotidase SurE (257 aa).

A divalent metal cation is bound by residues aspartate 11, aspartate 12, serine 42, and asparagine 99.

The protein belongs to the SurE nucleotidase family. A divalent metal cation is required as a cofactor.

The protein localises to the cytoplasm. It carries out the reaction a ribonucleoside 5'-phosphate + H2O = a ribonucleoside + phosphate. Nucleotidase that shows phosphatase activity on nucleoside 5'-monophosphates. The protein is 5'-nucleotidase SurE of Flavobacterium psychrophilum (strain ATCC 49511 / DSM 21280 / CIP 103535 / JIP02/86).